The following is a 381-amino-acid chain: Cytochrome b (381 aa).

Helical transmembrane passes span 34–54 (FGSLLATCLALQIITGIFLAM), 78–99 (WLIRNMHANGASLFFMCIYLHI), 114–134 (WNTGIILLLLVMATAFVGYVL), and 179–199 (FFTFHFLLPFAITGLTAVHLL). Heme b is bound by residues H84 and H98. The heme b site is built by H183 and H197. H202 is a binding site for a ubiquinone. Helical transmembrane passes span 227–247 (YKDLLGLILMLTFLLTLTLFS), 289–309 (LGGVLALLFSILILFLMPTLH), 321–341 (LTQILFWSLVADLLVLTWIGG), and 348–368 (FIIIGQVASTFYFLILLLLMP).

It belongs to the cytochrome b family. The cytochrome bc1 complex contains 3 respiratory subunits (MT-CYB, CYC1 and UQCRFS1), 2 core proteins (UQCRC1 and UQCRC2) and probably 6 low-molecular weight proteins. The cofactor is heme b.

It localises to the mitochondrion inner membrane. Component of the ubiquinol-cytochrome c reductase complex (complex III or cytochrome b-c1 complex) that is part of the mitochondrial respiratory chain. The b-c1 complex mediates electron transfer from ubiquinol to cytochrome c. Contributes to the generation of a proton gradient across the mitochondrial membrane that is then used for ATP synthesis. This is Cytochrome b (MT-CYB) from Chelonia mydas (Green sea-turtle).